Reading from the N-terminus, the 589-residue chain is Bifunctional protein TrpGD (589 aa).

The Glutamine amidotransferase type-1 domain occupies 46–241; it reads RVIVIDNYDS…LNIQDIQVKK (196 aa). 99–101 is an L-glutamine binding site; that stretch reads GPG. The active-site Nucleophile; for GATase activity is the cysteine 126. Residues glutamine 130 and 176-177 each bind L-glutamine; that span reads SL. Residues histidine 215 and glutamate 217 each act as for GATase activity in the active site. Positions 253–589 are anthranilate phosphoribosyltransferase; the sequence is ALKKLVEFED…MDYQKTLGNS (337 aa).

The protein in the C-terminal section; belongs to the anthranilate phosphoribosyltransferase family. As to quaternary structure, heterotetramer consisting of two non-identical subunits: a beta subunit (TrpG) and a large alpha subunit (TrpE).

It carries out the reaction chorismate + L-glutamine = anthranilate + pyruvate + L-glutamate + H(+). The enzyme catalyses N-(5-phospho-beta-D-ribosyl)anthranilate + diphosphate = 5-phospho-alpha-D-ribose 1-diphosphate + anthranilate. It participates in amino-acid biosynthesis; L-tryptophan biosynthesis; L-tryptophan from chorismate: step 1/5. It functions in the pathway amino-acid biosynthesis; L-tryptophan biosynthesis; L-tryptophan from chorismate: step 2/5. Its function is as follows. Part of a heterotetrameric complex that catalyzes the two-step biosynthesis of anthranilate, an intermediate in the biosynthesis of L-tryptophan. In the first step, the glutamine-binding beta subunit (TrpG) of anthranilate synthase (AS) provides the glutamine amidotransferase activity which generates ammonia as a substrate that, along with chorismate, is used in the second step, catalyzed by the large alpha subunit of AS (TrpE) to produce anthranilate. In the absence of TrpG, TrpE can synthesize anthranilate directly from chorismate and high concentrations of ammonia. In addition to synthesizing anthranilate, it also catalyzes the second step of the pathway, the transfer of the phosphoribosyl group of 5-phosphorylribose-1-pyrophosphate (PRPP) to anthranilate. The sequence is that of Bifunctional protein TrpGD (trpGD) from Thermotoga maritima (strain ATCC 43589 / DSM 3109 / JCM 10099 / NBRC 100826 / MSB8).